Here is a 73-residue protein sequence, read N- to C-terminus: Aldehyde dehydrogenase (73 aa).

Belongs to the aldehyde dehydrogenase family.

The enzyme catalyses an aldehyde + NAD(+) + H2O = a carboxylate + NADH + 2 H(+). Its pathway is alcohol metabolism; ethanol degradation; acetate from ethanol: step 2/2. This Geobacillus stearothermophilus (Bacillus stearothermophilus) protein is Aldehyde dehydrogenase.